The primary structure comprises 55 residues: Large ribosomal subunit protein bL33B (55 aa).

It belongs to the bacterial ribosomal protein bL33 family.

The protein is Large ribosomal subunit protein bL33B (rpmG2) of Mycobacterium tuberculosis (strain CDC 1551 / Oshkosh).